Consider the following 225-residue polypeptide: Elongation factor 1-beta (225 aa).

One can recognise a GST C-terminal domain in the interval Gly2–Val84. An N6-acetyllysine modification is found at Lys7. Residues Ser8 and Ser42 each carry the phosphoserine modification. Residues Lys78–Ala115 are disordered. Thr88 and Thr93 each carry phosphothreonine. 2 positions are modified to phosphoserine: Ser95 and Ser106. Residues Lys96 to Glu113 are compositionally biased toward acidic residues. Lys147 is covalently cross-linked (Glycyl lysine isopeptide (Lys-Gly) (interchain with G-Cter in SUMO2)). At Ser174 the chain carries Phosphoserine.

The protein belongs to the EF-1-beta/EF-1-delta family. In terms of assembly, EF-1 is composed of 4 subunits: alpha, beta (alpha subunit of the eEF1B subcomplex), delta (beta subunit of the eEF1B subcomplex), and gamma (gamma subunit of the eEF1B subcomplex). Interacts with elongation factor EEF1A1. Post-translationally, phosphorylation affects the GDP/GTP exchange rate.

In terms of biological role, catalytic subunit of the guanine nucleotide exchange factor (GEF) (eEF1B subcomplex) of the eukaryotic elongation factor 1 complex (eEF1). Stimulates the exchange of GDP for GTP on elongation factor 1A (eEF1A), probably by displacing GDP from the nucleotide binding pocket in eEF1A. This chain is Elongation factor 1-beta (EEF1B2), found in Homo sapiens (Human).